The sequence spans 251 residues: MKKTGYFLLAVIVIVAAAGVGYWKFSGNPDALREIVLEQCLPDQLQHQNPAPCAEVKPRAGYVVFKDRHGPLQYLLMPTYRINGTESPLLLEPATPNFFWLAWQARGYMSKKYGHDIPDSAVSLAINSRLGRSQDHLHIHISCIRPDVREQLDNDLTRISTRWLPLPGDLMGHEYLARRVTESELAQRSPFMMLAEEVPEARDHMGRYALAVVRQSDGSFVLLATERNLLTFNRASAEEIQDHSCAILSSR.

A helical membrane pass occupies residues 5–25; sequence GYFLLAVIVIVAAAGVGYWKF.

It belongs to the Cdh family.

It localises to the cell inner membrane. The catalysed reaction is a CDP-1,2-diacyl-sn-glycerol + H2O = a 1,2-diacyl-sn-glycero-3-phosphate + CMP + 2 H(+). It participates in phospholipid metabolism; CDP-diacylglycerol degradation; phosphatidate from CDP-diacylglycerol: step 1/1. In Salmonella paratyphi A (strain ATCC 9150 / SARB42), this protein is CDP-diacylglycerol pyrophosphatase.